The primary structure comprises 576 residues: uncharacterized protein (576 aa).

Positions 1–28 are cleaved as a signal peptide; sequence MLRLNGLRVLLRTLAAIGALLTTASASA. The active-site Acyl-ester intermediate is S185. 2 disulfides stabilise this stretch: C252-C269 and C278-C286. Ca(2+) contacts are provided by D253, D256, D260, and V262. Active-site charge relay system residues include D414 and H464. A disulfide bond links C529 and C551.

It belongs to the tannase family.

This is an uncharacterized protein from Xanthomonas campestris pv. campestris (strain ATCC 33913 / DSM 3586 / NCPPB 528 / LMG 568 / P 25).